Here is a 465-residue protein sequence, read N- to C-terminus: ATP-dependent protease ATPase subunit HslU (465 aa).

ATP contacts are provided by residues valine 19, 61–66 (GVGKTE), aspartate 277, glutamate 343, and arginine 415.

The protein belongs to the ClpX chaperone family. HslU subfamily. As to quaternary structure, a double ring-shaped homohexamer of HslV is capped on each side by a ring-shaped HslU homohexamer. The assembly of the HslU/HslV complex is dependent on binding of ATP.

The protein resides in the cytoplasm. Functionally, ATPase subunit of a proteasome-like degradation complex; this subunit has chaperone activity. The binding of ATP and its subsequent hydrolysis by HslU are essential for unfolding of protein substrates subsequently hydrolyzed by HslV. HslU recognizes the N-terminal part of its protein substrates and unfolds these before they are guided to HslV for hydrolysis. This is ATP-dependent protease ATPase subunit HslU from Geobacillus sp. (strain WCH70).